Here is a 163-residue protein sequence, read N- to C-terminus: Lysosomal enzyme trafficking factor (163 aa).

Transmembrane regions (helical) follow at residues 40 to 60 (MGWIGVGLYLLASAAAFYYVF) and 98 to 118 (LPFWVWTVIFLVPYLQMFLFL).

The protein belongs to the LYSET family. In terms of assembly, interacts with GNPTAB; this interaction is important for proper localization of GNPTAB in Golgi stacks. Interacts with MBTPS1.

Its subcellular location is the golgi apparatus membrane. In terms of biological role, required for mannose-6-phosphate-dependent trafficking of lysosomal enzymes. LYSET bridges GlcNAc-1-phosphate transferase (GNPTAB), to the membrane-bound transcription factor site-1 protease (MBTPS1), thus allowing proteolytic activation of the GNPTAB. GNPTAB is involved in the regulation of M6P-dependent Golgi-to-lysosome trafficking of lysosomal enzymes. LYSET is thus an essential factor for maturation and delivery of lysosomal hydrolases. Its function is as follows. (Microbial infection) Essential for infection by muliple viruses, including SARS-CoV-2, that utilize activated cathepsins for entry after M6P-dependent lysosomal transport. This is Lysosomal enzyme trafficking factor from Homo sapiens (Human).